The chain runs to 156 residues: Small ribosomal subunit protein uS7 (156 aa).

Part of the 30S ribosomal subunit. Contacts proteins S9 and S11.

Its function is as follows. One of the primary rRNA binding proteins, it binds directly to 16S rRNA where it nucleates assembly of the head domain of the 30S subunit. Is located at the subunit interface close to the decoding center, probably blocks exit of the E-site tRNA. This is Small ribosomal subunit protein uS7 from Rhodopseudomonas palustris (strain ATCC BAA-98 / CGA009).